The following is a 571-amino-acid chain: Proline-rich protein 35 (571 aa).

Disordered stretches follow at residues 1–27 (MSRE…PHYI), 79–187 (GSTT…EGSV), 286–402 (APVS…GSPE), and 476–571 (GPQA…GAEV). The segment covering 16-26 (ARSRKPKKPHY) has biased composition (basic residues). The span at 165–175 (GMGGDPRGVGA) shows a compositional bias: gly residues. Residues 316–336 (TPRDPGQEGELERAAQSDPRR) are compositionally biased toward basic and acidic residues. Residues 351-367 (PSLTRFCSRSSLPTGSS) are compositionally biased toward polar residues. Residues 380-399 (PETPGPEGPLPLQPRGPVPG) show a composition bias toward pro residues.

This chain is Proline-rich protein 35 (PRR35), found in Homo sapiens (Human).